A 111-amino-acid polypeptide reads, in one-letter code: Protein E7 (111 aa).

Positions 1–44 are E7 terminal domain; that stretch reads MHGERPTLGDIVLDLQPEPVSLSCNEQLDSSDSEDDHEQDQLDS. Positions 22-26 match the LXCXE motif; interaction with host RB1 and TMEM173/STING motif; it reads LSCNE. The interval 24–55 is disordered; sequence CNEQLDSSDSEDDHEQDQLDSSHNRQREQPTQ. Residues 29 to 38 show a composition bias toward acidic residues; the sequence is DSSDSEDDHE. A compositionally biased stretch (basic and acidic residues) spans 39-51; the sequence is QDQLDSSHNRQRE. Residues 71 to 107 fold into a zinc finger; it reads CVFCHCLVRLVVHCTATDIRQVHQLLMGTLNIVCPNC. Residues 89–97 carry the Nuclear export signal motif; sequence IRQVHQLLM.

This sequence belongs to the papillomaviridae E7 protein family. Homodimer. Homooligomer. Interacts with host RB1; this interaction induces dissociation of RB1-E2F1 complex thereby disrupting RB1 activity. Interacts with host EP300; this interaction represses EP300 transcriptional activity. Interacts with protein E2; this interaction inhibits E7 oncogenic activity. Interacts with host TMEM173/STING; this interaction impairs the ability of TMEM173/STING to sense cytosolic DNA and promote the production of type I interferon (IFN-alpha and IFN-beta). Highly phosphorylated.

The protein localises to the host cytoplasm. It localises to the host nucleus. In terms of biological role, plays a role in viral genome replication by driving entry of quiescent cells into the cell cycle. Stimulation of progression from G1 to S phase allows the virus to efficiently use the cellular DNA replicating machinery to achieve viral genome replication. E7 protein has both transforming and trans-activating activities. Induces the disassembly of the E2F1 transcription factor from RB1, with subsequent transcriptional activation of E2F1-regulated S-phase genes. Interferes with host histone deacetylation mediated by HDAC1 and HDAC2, leading to transcription activation. Also plays a role in the inhibition of both antiviral and antiproliferative functions of host interferon alpha. Interaction with host TMEM173/STING impairs the ability of TMEM173/STING to sense cytosolic DNA and promote the production of type I interferon (IFN-alpha and IFN-beta). In Human papillomavirus 7, this protein is Protein E7.